A 305-amino-acid polypeptide reads, in one-letter code: N-acetyl-D-glucosamine kinase (305 aa).

Residues 4 to 11 and 133 to 140 each bind ATP; these read GFDIGGTK and GFGGGLVF. Zn(2+)-binding residues include histidine 157, cysteine 178, cysteine 180, and cysteine 185.

This sequence belongs to the ROK (NagC/XylR) family. NagK subfamily.

The enzyme catalyses N-acetyl-D-glucosamine + ATP = N-acetyl-D-glucosamine 6-phosphate + ADP + H(+). It participates in cell wall biogenesis; peptidoglycan recycling. Its function is as follows. Catalyzes the phosphorylation of N-acetyl-D-glucosamine (GlcNAc) derived from cell-wall degradation, yielding GlcNAc-6-P. The sequence is that of N-acetyl-D-glucosamine kinase from Histophilus somni (strain 129Pt) (Haemophilus somnus).